Reading from the N-terminus, the 161-residue chain is Crossover junction endodeoxyribonuclease RuvC (161 aa).

Active-site residues include Asp9, Glu69, and His144. Residues Asp9, Glu69, and His144 each coordinate Mg(2+).

This sequence belongs to the RuvC family. As to quaternary structure, homodimer which binds Holliday junction (HJ) DNA. The HJ becomes 2-fold symmetrical on binding to RuvC with unstacked arms; it has a different conformation from HJ DNA in complex with RuvA. In the full resolvosome a probable DNA-RuvA(4)-RuvB(12)-RuvC(2) complex forms which resolves the HJ. It depends on Mg(2+) as a cofactor.

Its subcellular location is the cytoplasm. The catalysed reaction is Endonucleolytic cleavage at a junction such as a reciprocal single-stranded crossover between two homologous DNA duplexes (Holliday junction).. The RuvA-RuvB-RuvC complex processes Holliday junction (HJ) DNA during genetic recombination and DNA repair. Endonuclease that resolves HJ intermediates. Cleaves cruciform DNA by making single-stranded nicks across the HJ at symmetrical positions within the homologous arms, yielding a 5'-phosphate and a 3'-hydroxyl group; requires a central core of homology in the junction. The consensus cleavage sequence is 5'-(A/T)TT(C/G)-3'. Cleavage occurs on the 3'-side of the TT dinucleotide at the point of strand exchange. HJ branch migration catalyzed by RuvA-RuvB allows RuvC to scan DNA until it finds its consensus sequence, where it cleaves and resolves the cruciform DNA. The chain is Crossover junction endodeoxyribonuclease RuvC from Borrelia turicatae (strain 91E135).